The sequence spans 215 residues: Ribulose-phosphate 3-epimerase (215 aa).

Position 13 (S13) interacts with substrate. A divalent metal cation is bound by residues H38, D40, H69, and D175. D40 (proton acceptor) is an active-site residue. Substrate-binding positions include H69, 175–177, and 196–197; these read DGG and GS. Catalysis depends on D175, which acts as the Proton donor.

The protein belongs to the ribulose-phosphate 3-epimerase family. Requires a divalent metal cation as cofactor.

It catalyses the reaction D-ribulose 5-phosphate = D-xylulose 5-phosphate. It functions in the pathway carbohydrate degradation. Functionally, catalyzes the reversible epimerization of D-ribulose 5-phosphate to D-xylulose 5-phosphate. This chain is Ribulose-phosphate 3-epimerase, found in Mycoplasma pneumoniae (strain ATCC 29342 / M129 / Subtype 1) (Mycoplasmoides pneumoniae).